Consider the following 462-residue polypeptide: Bifunctional protein GlmU (462 aa).

Residues M1–K235 form a pyrophosphorylase region. UDP-N-acetyl-alpha-D-glucosamine-binding positions include L11–G14, K25, Q80, G85–T86, Y107–D109, G144, E159, and N233. D109 is a Mg(2+) binding site. N233 lines the Mg(2+) pocket. The tract at residues S236 to S256 is linker. The N-acetyltransferase stretch occupies residues G257–K462. UDP-N-acetyl-alpha-D-glucosamine is bound by residues R339 and K357. H369 serves as the catalytic Proton acceptor. Residues Y372 and N383 each contribute to the UDP-N-acetyl-alpha-D-glucosamine site. Residues A386, N392 to Y393, A429, and R446 contribute to the acetyl-CoA site.

It in the N-terminal section; belongs to the N-acetylglucosamine-1-phosphate uridyltransferase family. This sequence in the C-terminal section; belongs to the transferase hexapeptide repeat family. Homotrimer. It depends on Mg(2+) as a cofactor.

The protein resides in the cytoplasm. It catalyses the reaction alpha-D-glucosamine 1-phosphate + acetyl-CoA = N-acetyl-alpha-D-glucosamine 1-phosphate + CoA + H(+). It carries out the reaction N-acetyl-alpha-D-glucosamine 1-phosphate + UTP + H(+) = UDP-N-acetyl-alpha-D-glucosamine + diphosphate. Its pathway is nucleotide-sugar biosynthesis; UDP-N-acetyl-alpha-D-glucosamine biosynthesis; N-acetyl-alpha-D-glucosamine 1-phosphate from alpha-D-glucosamine 6-phosphate (route II): step 2/2. The protein operates within nucleotide-sugar biosynthesis; UDP-N-acetyl-alpha-D-glucosamine biosynthesis; UDP-N-acetyl-alpha-D-glucosamine from N-acetyl-alpha-D-glucosamine 1-phosphate: step 1/1. It participates in bacterial outer membrane biogenesis; LPS lipid A biosynthesis. Catalyzes the last two sequential reactions in the de novo biosynthetic pathway for UDP-N-acetylglucosamine (UDP-GlcNAc). The C-terminal domain catalyzes the transfer of acetyl group from acetyl coenzyme A to glucosamine-1-phosphate (GlcN-1-P) to produce N-acetylglucosamine-1-phosphate (GlcNAc-1-P), which is converted into UDP-GlcNAc by the transfer of uridine 5-monophosphate (from uridine 5-triphosphate), a reaction catalyzed by the N-terminal domain. This is Bifunctional protein GlmU from Blochmanniella pennsylvanica (strain BPEN).